A 454-amino-acid chain; its full sequence is Epsin-1 (454 aa).

The region spanning 11–143 (NLVKGYSSTQ…SDDERLNEER (133 aa)) is the ENTH domain. Disordered regions lie at residues 142–195 (ERNM…EDYE) and 292–350 (YLAS…GNQS). Basic residues predominate over residues 149 to 160 (GRNRKGRRRRGT). Residue T160 is modified to Phosphothreonine. Phosphoserine is present on S163. UIM domains are found at residues 165–184 (ENDD…AEED) and 189–208 (KQDE…EELK). Residue T180 is modified to Phosphothreonine. Over residues 180-191 (TAEEDERRRKQD) the composition is skewed to basic and acidic residues. The segment covering 292–302 (YLASMQQQQQA) has biased composition (low complexity). Polar residues-rich tracts occupy residues 303–329 (MSNN…ASSP) and 340–350 (PLIQNRTGNQS). Phosphoserine is present on S328. A Glycyl lysine isopeptide (Lys-Gly) (interchain with G-Cter in ubiquitin) cross-link involves residue K357. Phosphothreonine occurs at positions 364, 366, 384, 386, and 388. Over residues 384 to 398 (TKTGTFINSQGTGYR) the composition is skewed to polar residues. Residues 384–405 (TKTGTFINSQGTGYRQVSDDPN) form a disordered region. T395 and T415 each carry phosphothreonine; by PRK1. Polar residues predominate over residues 418–428 (PSTSVVPTQTG). The tract at residues 418–454 (PSTSVVPTQTGYGFGNQSQQQSQNNGSNNRGYTLIDL) is disordered. A compositionally biased stretch (low complexity) spans 432–446 (GNQSQQQSQNNGSNN). The clathrin-binding stretch occupies residues 447 to 454 (RGYTLIDL).

The protein belongs to the epsin family. In terms of assembly, interacts with EDE1 and PAN1.

The protein localises to the cytoplasm. It is found in the membrane. Binds to membranes enriched in phosphatidylinositol 3,5-bisphosphate (PtdIns(3,5)P2) and phosphatidylinositol 4,5-bisphosphate (PtdIns(4,5)P2). Required for endocytosis and localization of actin. Negatively regulated via phosphorylation. The sequence is that of Epsin-1 (ENT1) from Saccharomyces cerevisiae (strain ATCC 204508 / S288c) (Baker's yeast).